Consider the following 115-residue polypeptide: Macrophage migration inhibitory factor (115 aa).

P2 functions as the Proton acceptor; via imino nitrogen in the catalytic mechanism. Substrate-binding residues include K33 and I65. The residue at position 78 (K78) is an N6-acetyllysine; alternate. K78 is modified (N6-succinyllysine; alternate). Substrate is bound at residue N98.

This sequence belongs to the MIF family. As to quaternary structure, homotrimer. Interacts with CD74 and CXCR2 extracellular domain and COPS5. Interacts with the USO1 and BNIPL.

It is found in the secreted. The protein localises to the cytoplasm. It catalyses the reaction 3-phenylpyruvate = enol-phenylpyruvate. The enzyme catalyses L-dopachrome = 5,6-dihydroxyindole-2-carboxylate. Functionally, pro-inflammatory cytokine involved in the innate immune response to bacterial pathogens. The expression of MIF at sites of inflammation suggests a role as mediator in regulating the function of macrophages in host defense. Counteracts the anti-inflammatory activity of glucocorticoids. Has phenylpyruvate tautomerase and dopachrome tautomerase activity (in vitro), but the physiological substrate is not known. It is not clear whether the tautomerase activity has any physiological relevance, and whether it is important for cytokine activity. This Mus musculus (Mouse) protein is Macrophage migration inhibitory factor.